The primary structure comprises 883 residues: Phosphoenolpyruvate carboxylase (883 aa).

Residues His-138 and Lys-546 contribute to the active site.

It belongs to the PEPCase type 1 family. The cofactor is Mg(2+).

It carries out the reaction oxaloacetate + phosphate = phosphoenolpyruvate + hydrogencarbonate. Its function is as follows. Forms oxaloacetate, a four-carbon dicarboxylic acid source for the tricarboxylic acid cycle. This is Phosphoenolpyruvate carboxylase from Shigella dysenteriae serotype 1 (strain Sd197).